A 290-amino-acid polypeptide reads, in one-letter code: UPF0761 membrane protein YihY (290 aa).

Transmembrane regions (helical) follow at residues 44-64 (LLSLVPLVAVVFALFAAFPMF), 104-124 (VGACGLIVTALLLMYSIDSAL), 140-160 (FAVYWMILTLGPLLAGASLAI), 183-203 (IFPLLLSWISFWLLYSIVPTI), 210-230 (AIVGAFVAALLFEAGKKGFAL), and 244-264 (VLAVIPILFVWVYWTWCIVLL).

It belongs to the UPF0761 family.

The protein localises to the cell inner membrane. This Escherichia coli O1:K1 / APEC protein is UPF0761 membrane protein YihY.